Here is a 279-residue protein sequence, read N- to C-terminus: Urease accessory protein UreD (279 aa).

This sequence belongs to the UreD family. UreD, UreF and UreG form a complex that acts as a GTP-hydrolysis-dependent molecular chaperone, activating the urease apoprotein by helping to assemble the nickel containing metallocenter of UreC. The UreE protein probably delivers the nickel.

The protein localises to the cytoplasm. Functionally, required for maturation of urease via the functional incorporation of the urease nickel metallocenter. This is Urease accessory protein UreD from Streptococcus thermophilus (strain CNRZ 1066).